We begin with the raw amino-acid sequence, 293 residues long: 4-hydroxy-tetrahydrodipicolinate synthase (293 aa).

Thr-44 contacts pyruvate. Tyr-132 serves as the catalytic Proton donor/acceptor. Lys-160 serves as the catalytic Schiff-base intermediate with substrate. Ile-202 contacts pyruvate.

The protein belongs to the DapA family. As to quaternary structure, homotetramer; dimer of dimers.

The protein resides in the cytoplasm. The catalysed reaction is L-aspartate 4-semialdehyde + pyruvate = (2S,4S)-4-hydroxy-2,3,4,5-tetrahydrodipicolinate + H2O + H(+). Its pathway is amino-acid biosynthesis; L-lysine biosynthesis via DAP pathway; (S)-tetrahydrodipicolinate from L-aspartate: step 3/4. Its function is as follows. Catalyzes the condensation of (S)-aspartate-beta-semialdehyde [(S)-ASA] and pyruvate to 4-hydroxy-tetrahydrodipicolinate (HTPA). This Pelagibacter ubique (strain HTCC1062) protein is 4-hydroxy-tetrahydrodipicolinate synthase.